Consider the following 380-residue polypeptide: Putative T-box protein 40 (380 aa).

The segment at residues 11 to 192 (MAEEDRWLTQ…KNATFENRLD (182 aa)) is a DNA-binding region (T-box). Residues 188–215 (ENRLDGGNKRKNTNSREEPSSKRSKNET) form a disordered region. Basic and acidic residues predominate over residues 189 to 215 (NRLDGGNKRKNTNSREEPSSKRSKNET).

It is found in the nucleus. This is Putative T-box protein 40 (tbx-40) from Caenorhabditis elegans.